A 133-amino-acid chain; its full sequence is uncharacterized protein (133 aa).

The FAS1 domain occupies 1–130 (MPNIVEIAVS…GIIHVIDNVI (130 aa)).

This is an uncharacterized protein from Synechocystis sp. (strain ATCC 27184 / PCC 6803 / Kazusa).